A 180-amino-acid chain; its full sequence is Large ribosomal subunit protein uL6 (180 aa).

This sequence belongs to the universal ribosomal protein uL6 family. Part of the 50S ribosomal subunit.

Its function is as follows. This protein binds to the 23S rRNA, and is important in its secondary structure. It is located near the subunit interface in the base of the L7/L12 stalk, and near the tRNA binding site of the peptidyltransferase center. The polypeptide is Large ribosomal subunit protein uL6 (Anaeromyxobacter dehalogenans (strain 2CP-1 / ATCC BAA-258)).